We begin with the raw amino-acid sequence, 182 residues long: uncharacterized protein (182 aa).

This sequence to M.tuberculosis Rv2313c.

This is an uncharacterized protein from Escherichia coli (strain K12).